A 690-amino-acid chain; its full sequence is Amino-acid acetyltransferase, mitochondrial (690 aa).

The interval 62–93 (RFPSVKKPKPPIPRQNQGAVETQSGKENEKPG) is disordered. Residues 75 to 84 (RQNQGAVETQ) are compositionally biased toward polar residues. Residues 508-679 (DGHHLTLDDP…DYEAVCRSIQ (172 aa)) form the N-acetyltransferase domain.

This sequence belongs to the acetyltransferase family.

It is found in the mitochondrion. It carries out the reaction L-glutamate + acetyl-CoA = N-acetyl-L-glutamate + CoA + H(+). Its pathway is amino-acid biosynthesis; L-arginine biosynthesis; N(2)-acetyl-L-ornithine from L-glutamate: step 1/4. N-acetylglutamate synthase involved in arginine biosynthesis. This chain is Amino-acid acetyltransferase, mitochondrial (arg2), found in Talaromyces stipitatus (strain ATCC 10500 / CBS 375.48 / QM 6759 / NRRL 1006) (Penicillium stipitatum).